Reading from the N-terminus, the 261-residue chain is Thioesterase TesA (261 aa).

Residues serine 104, aspartate 208, and histidine 236 contribute to the active site.

The protein belongs to the thioesterase family.

It catalyses the reaction a fatty acyl-CoA + H2O = a fatty acid + CoA + H(+). Involved in the synthesis of both phthiocerol dimycocerosates (PDIMs) and phenolic glycolipids (PGLs), which are structurally related lipids non-covalently bound to the outer cell wall layer of M.tuberculosis and are important virulence factors. In Mycobacterium leprae (strain TN), this protein is Thioesterase TesA (tesA).